The sequence spans 240 residues: MSTRQAVFERDVDEDRWPRSARGLAGVNTVFEGDSEINSKAMRLLEKTRHRRNLLNRREDRRRYLGGVKAKAIESDYYHRNQLPSSYDAGNDDFEPINNSHVESEEENKRLPEKYSLDKYVKRSRKQRDHRHIVAKPKEKRNFAPSKLAMYEIEKYQRSTALLIQKIPFAKLVKEVTEEFAGESQDLRWQSMAILALQEASEAYLVGLLEHTNLLALHAKRITIMKKDMQLARRIRGQFI.

Positions 83-109 (LPSSYDAGNDDFEPINNSHVESEEENK) are disordered. The H3-like stretch occupies residues 127–238 (QRDHRHIVAK…MQLARRIRGQ (112 aa)).

It belongs to the histone H3 family. As to quaternary structure, component of centromeric nucleosomes, where DNA is wrapped around a histone octamer core. The octamer contains two molecules each of H2A, H2B, CSE4/CENPA and H4 assembled in one CSE4-H4 heterotetramer and two H2A-H2B heterodimers. Interacts with the inner kinetochore. Ubiquitinated. Is degraded through ubiquitin-mediated proteolysis when not protected by its association to the kinetochore.

The protein resides in the nucleus. It is found in the chromosome. The protein localises to the centromere. Histone H3-like nucleosomal protein that is specifically found in centromeric nucleosomes. Replaces conventional H3 in the nucleosome core of centromeric chromatin that serves as an assembly site for the inner kinetochore. Required for recruitment and assembly of kinetochore proteins, mitotic progression and chromosome segregation. May serve as an epigenetic mark that propagates centromere identity through replication and cell division. The sequence is that of Histone H3-like centromeric protein CSE4 (CSE4) from Candida glabrata (strain ATCC 2001 / BCRC 20586 / JCM 3761 / NBRC 0622 / NRRL Y-65 / CBS 138) (Yeast).